Reading from the N-terminus, the 444-residue chain is 23S rRNA (uracil(1939)-C(5))-methyltransferase RlmD (444 aa).

The TRAM domain maps to 5–67; that stretch reads RNRFDRTPFQ…RHFDEAKTVE (63 aa). [4Fe-4S] cluster is bound by residues Cys-80, Cys-86, Cys-89, and Cys-168. Residues Gln-276, Phe-305, Asn-310, Glu-326, Asp-353, and Asp-374 each coordinate S-adenosyl-L-methionine. Cys-400 serves as the catalytic Nucleophile.

Belongs to the class I-like SAM-binding methyltransferase superfamily. RNA M5U methyltransferase family. RlmD subfamily.

It catalyses the reaction uridine(1939) in 23S rRNA + S-adenosyl-L-methionine = 5-methyluridine(1939) in 23S rRNA + S-adenosyl-L-homocysteine + H(+). Catalyzes the formation of 5-methyl-uridine at position 1939 (m5U1939) in 23S rRNA. The sequence is that of 23S rRNA (uracil(1939)-C(5))-methyltransferase RlmD from Xanthomonas oryzae pv. oryzae (strain MAFF 311018).